Here is a 606-residue protein sequence, read N- to C-terminus: Replication protein E1 (606 aa).

Residues 76-78 carry the Nuclear localization signal motif; the sequence is KRK. 2 positions are modified to phosphoserine; by host: Ser-81 and Ser-89. Positions 144–307 are DNA-binding region; sequence GTGDVDIDYL…TVLGHQNAEA (164 aa). In terms of domain architecture, SF3 helicase spans 406-556; the sequence is VNFIMFLAAL…FPMKSDNTPQ (151 aa). An ATP-binding site is contributed by 432-439; that stretch reads GPPNSGKS. Lys-513 participates in a covalent cross-link: Glycyl lysine isopeptide (Lys-Gly) (interchain with G-Cter in SUMO). Residues 581 to 606 form a disordered region; sequence EEEEEGEHGETQRAFQCSARSANEHI. Positions 593–606 are enriched in polar residues; the sequence is RAFQCSARSANEHI.

It belongs to the papillomaviridae E1 protein family. In terms of assembly, can form hexamers. Interacts with E2 protein; this interaction increases E1 DNA binding specificity. Interacts with host DNA polymerase subunit POLA2. Interacts with host single stranded DNA-binding protein RPA1. Interacts with host TOP1; this interaction stimulates the enzymatic activity of TOP1. Post-translationally, phosphorylated. In terms of processing, sumoylated.

It localises to the host nucleus. It carries out the reaction Couples ATP hydrolysis with the unwinding of duplex DNA by translocating in the 3'-5' direction.. It catalyses the reaction ATP + H2O = ADP + phosphate + H(+). Its function is as follows. ATP-dependent DNA 3'-5' helicase required for initiation of viral DNA replication. It forms a complex with the viral E2 protein. The E1-E2 complex binds to the replication origin which contains binding sites for both proteins. During the initial step, a dimer of E1 interacts with a dimer of protein E2 leading to a complex that binds the viral origin of replication with high specificity. Then, a second dimer of E1 displaces the E2 dimer in an ATP-dependent manner to form the E1 tetramer. Following this, two E1 monomers are added to each half of the site, which results in the formation of two E1 trimers on the viral ori. Subsequently, two hexamers will be created. The double hexamer acts as a bi-directional helicase machinery and unwinds the viral DNA and then recruits the host DNA polymerase to start replication. The chain is Replication protein E1 from Human papillomavirus type RTRX7.